The chain runs to 309 residues: Taste receptor type 2 member 20 (309 aa).

At 1-6 the chain is on the extracellular side; sequence MMSFLH. A helical transmembrane segment spans residues 7–27; the sequence is IVFSILVVVAFILGNFANGFI. Residues 28–46 are Cytoplasmic-facing; that stretch reads ALINFIAWVKRQKISSADQ. A helical membrane pass occupies residues 47–67; the sequence is IIAALAVSRVGLLWVILLHWY. Residues 68-79 are Extracellular-facing; that stretch reads STVLNPTSSNLK. A helical membrane pass occupies residues 80–100; the sequence is VIIFISNAWAVTNHFSIWLAT. Over 101-125 the chain is Cytoplasmic; the sequence is SLSIFYLLKIVNFSRLIFHHLKRKA. A helical membrane pass occupies residues 126–146; that stretch reads KSVVLVIVLGSLFFLVCHLVM. At 147 to 178 the chain is on the extracellular side; it reads KNTYINVWTEECEGNVTWKIKLRNAMHLSNLT. A helical membrane pass occupies residues 179–199; the sequence is VAMLANLIPFTLTLISFLLLI. The Cytoplasmic portion of the chain corresponds to 200–229; the sequence is YSLCKHLKKMQLHGKGSQDPSTKIHIKALQ. A helical membrane pass occupies residues 230 to 250; it reads TVTSFLILLAIYFLCLITSFW. Topologically, residues 251-259 are extracellular; sequence NSKMRPKEI. Residues 260-280 form a helical membrane-spanning segment; that stretch reads VLMLCQAFGIIYPSFHSFILI. Over 281–309 the chain is Cytoplasmic; the sequence is WGNKTLKQTFLSVLWQVTCWAKGQNQSTP.

This sequence belongs to the G-protein coupled receptor T2R family.

Its subcellular location is the membrane. In terms of biological role, receptor that may play a role in the perception of bitterness and is gustducin-linked. May play a role in sensing the chemical composition of the gastrointestinal content. The activity of this receptor may stimulate alpha gustducin, mediate PLC-beta-2 activation and lead to the gating of TRPM5. This is Taste receptor type 2 member 20 (TAS2R20) from Pan paniscus (Pygmy chimpanzee).